A 196-amino-acid chain; its full sequence is MTSKQYSVKLTSDFDNPRWIGRHKHMFNFLDVNHNGKISLDEMVYKASDIVINNLGATPEQAKRHKDAVEAFFGGAGMKYGVETDWPAYIEGWKKLATDELEKYAKNEPTLIRIWGDALFDIVDKDQNGAITLDEWKAYTKAAGIIQSSEDCEETFRVCDIDESGQLDVDEMTRQHLGFWYTMDPACEKLYGGAVP.

Residues 1 to 7 constitute a propeptide that is removed on maturation; the sequence is MTSKQYS. EF-hand domains follow at residues 18-53, 54-108, 117-146, and 147-182; these read RWIG…IVIN, NLGA…AKNE, DALF…AGII, and QSSE…FWYT. Ca(2+) contacts are provided by aspartate 31, asparagine 33, asparagine 35, lysine 37, and glutamate 42. May interact with the chromophore regions lie at residues 47-57, 62-72, and 107-117; these read ASDIVINNLGA, AKRHKDAVEAF, and NEPTLIRIWGD. Aspartate 124, aspartate 126, asparagine 128, glutamate 135, aspartate 160, aspartate 162, serine 164, glutamine 166, and glutamate 171 together coordinate Ca(2+).

This sequence belongs to the aequorin family. In terms of processing, the reduction of the disulfide bond is necessary to regenerate aequorin from apoaequorin.

In terms of biological role, ca(2+)-dependent bioluminescence photoprotein. Displays an emission peak at 470 nm (blue light). Trace amounts of calcium ion trigger the intramolecular oxidation of the chromophore, coelenterazine into coelenteramide and CO(2) with the concomitant emission of light. The chain is Aequorin-2 from Aequorea victoria (Water jellyfish).